The chain runs to 508 residues: Cytochrome P450 monooxygenase aflV (508 aa).

The helical transmembrane segment at 18–38 (LTWWFLAVGGAWIVSKIIKIL) threads the bilayer. N-linked (GlcNAc...) asparagine glycans are attached at residues Asn-192, Asn-209, Asn-302, and Asn-408. Cys-453 contacts heme.

This sequence belongs to the cytochrome P450 family. The cofactor is heme.

The protein resides in the membrane. Its pathway is mycotoxin biosynthesis; aflatoxin biosynthesis. Functionally, cytochrome P450 monooxygenase; part of the gene cluster that mediates the biosynthesis of aflatoxins, a group of polyketide-derived furanocoumarins, and part of the most toxic and carcinogenic compounds among the known mycotoxins. The four major aflatoxins produced by A.parasiticus are aflatoxin B1 (AFB1), aflatoxin B2 (AFB2), aflatoxin G1 (AFG1) and aflatoxin G2 (AFG2). The role of the cytochrome P450 monooxygenase aflV in aflatoxin biosynthesis has still to be characterized. The biosynthesis of aflatoxins begins with the norsolorinic acid synthase aflC that combines a hexanoyl starter unit produced by the fatty acid synthase aflA/aflB and 7 malonyl-CoA extender units to synthesize the precursor NOR. The second step is the conversion of NOR to averantin and requires the norsolorinic acid ketoreductase aflD, which catalyzes the dehydration of norsolorinic acid to form (1'S)-averantin. The norsolorinic acid reductases aflE and aflF may also play a role in the conversion of NOR to AVN. The cytochrome P450 monooxygenase aflG then catalyzes the hydroxylation of AVN to 5'hydroxyaverantin (HAVN). The next step is performed by the 5'-hydroxyaverantin dehydrogenase aflH that transforms HAVN to 5'-oxoaverantin (OAVN) which is further converted to averufin (AVF) by aflK that plays a dual role in the pathway, as a 5'-oxoaverantin cyclase that mediates conversion of 5'-oxoaverantin, as well as a versicolorin B synthase in a later step in the pathway. The averufin oxidase aflI catalyzes the conversion of AVF to versiconal hemiacetal acetate (VHA). VHA is then the substrate for the versiconal hemiacetal acetate esterase aflJ to yield versiconal (VAL). Versicolorin B synthase aflK then converts VAL to versicolorin B (VERB) by closing the bisfuran ring of aflatoxin which is required for DNA-binding, thus giving to aflatoxin its activity as a mutagen. Then, the activity of the versicolorin B desaturase aflL leads to versicolorin A (VERA). A branch point starts from VERB since it can also be converted to dihydrodemethylsterigmatocystin (DMDHST), probably also by aflL, VERA being a precursor for aflatoxins B1 and G1, and DMDHST for aflatoxins B2 and G2. Next, the versicolorin reductase aflM and the cytochrome P450 monooxygenase aflN are involved in conversion of VERA to demethylsterigmatocystin (DMST). AflX and aflY seem also involved in this step, through probable aflX-mediated epoxide ring-opening step following versicolorin A oxidation and aflY-mediated Baeyer-Villiger oxidation required for the formation of the xanthone ring. The methyltransferase aflO then leads to the modification of DMST to sterigmatocystin (ST), and of DMDHST to dihydrosterigmatocystin (DHST). Both ST and DHST are then substrates of the O-methyltransferase aflP to yield O-methylsterigmatocystin (OMST) and dihydro-O-methylsterigmatocystin (DHOMST), respectively. Finally OMST is converted to aflatoxins B1 and G1, and DHOMST to aflatoxins B2 and G2, via the action of several enzymes including O-methylsterigmatocystin oxidoreductase aflQ, the cytochrome P450 monooxygenase aflU, but also the NADH-dependent flavin oxidoreductase nadA which is specifically required for the synthesis of AFG1. In Aspergillus parasiticus (strain ATCC 56775 / NRRL 5862 / SRRC 143 / SU-1), this protein is Cytochrome P450 monooxygenase aflV.